Here is an 82-residue protein sequence, read N- to C-terminus: Cytochrome b559 subunit alpha (82 aa).

The chain crosses the membrane as a helical span at residues 22–36 (VIHAVTLPSIFLAGF). His-24 provides a ligand contact to heme.

This sequence belongs to the PsbE/PsbF family. Heterodimer of an alpha subunit and a beta subunit. PSII is composed of 1 copy each of membrane proteins PsbA, PsbB, PsbC, PsbD, PsbE, PsbF, PsbH, PsbI, PsbJ, PsbK, PsbL, PsbM, PsbT, PsbX, PsbY, PsbZ, Psb30/Ycf12, peripheral proteins PsbO, CyanoQ (PsbQ), PsbU, PsbV and a large number of cofactors. It forms dimeric complexes. It depends on heme b as a cofactor.

The protein localises to the cellular thylakoid membrane. This b-type cytochrome is tightly associated with the reaction center of photosystem II (PSII). PSII is a light-driven water:plastoquinone oxidoreductase that uses light energy to abstract electrons from H(2)O, generating O(2) and a proton gradient subsequently used for ATP formation. It consists of a core antenna complex that captures photons, and an electron transfer chain that converts photonic excitation into a charge separation. The protein is Cytochrome b559 subunit alpha of Synechococcus sp. (strain CC9605).